Consider the following 233-residue polypeptide: Small ribosomal subunit protein uS3 (233 aa).

Residues 39–107 (IRAFLKRKLY…DVNINIKEER (69 aa)) form the KH type-2 domain. The segment covering 212–222 (MQPEKTEESAP) has biased composition (basic and acidic residues). The tract at residues 212–233 (MQPEKTEESAPAKKPRRTRRGK) is disordered. Basic residues predominate over residues 224–233 (KKPRRTRRGK).

Belongs to the universal ribosomal protein uS3 family. In terms of assembly, part of the 30S ribosomal subunit. Forms a tight complex with proteins S10 and S14.

In terms of biological role, binds the lower part of the 30S subunit head. Binds mRNA in the 70S ribosome, positioning it for translation. The protein is Small ribosomal subunit protein uS3 of Campylobacter jejuni subsp. jejuni serotype O:6 (strain 81116 / NCTC 11828).